The following is a 124-amino-acid chain: Large ribosomal subunit protein bL12 (124 aa).

This sequence belongs to the bacterial ribosomal protein bL12 family. Homodimer. Part of the ribosomal stalk of the 50S ribosomal subunit. Forms a multimeric L10(L12)X complex, where L10 forms an elongated spine to which 2 to 4 L12 dimers bind in a sequential fashion. Binds GTP-bound translation factors.

Functionally, forms part of the ribosomal stalk which helps the ribosome interact with GTP-bound translation factors. Is thus essential for accurate translation. This Burkholderia cenocepacia (strain HI2424) protein is Large ribosomal subunit protein bL12.